Consider the following 306-residue polypeptide: 4-diphosphocytidyl-2-C-methyl-D-erythritol kinase (306 aa).

Residue Lys11 is part of the active site. 98–108 contacts ATP; that stretch reads PIAGGMGGGSA. Residue Asp140 is part of the active site.

It belongs to the GHMP kinase family. IspE subfamily.

It carries out the reaction 4-CDP-2-C-methyl-D-erythritol + ATP = 4-CDP-2-C-methyl-D-erythritol 2-phosphate + ADP + H(+). Its pathway is isoprenoid biosynthesis; isopentenyl diphosphate biosynthesis via DXP pathway; isopentenyl diphosphate from 1-deoxy-D-xylulose 5-phosphate: step 3/6. Functionally, catalyzes the phosphorylation of the position 2 hydroxy group of 4-diphosphocytidyl-2C-methyl-D-erythritol. The polypeptide is 4-diphosphocytidyl-2-C-methyl-D-erythritol kinase (Leifsonia xyli subsp. xyli (strain CTCB07)).